The following is a 406-amino-acid chain: Proteasome-activating nucleotidase 1 (406 aa).

Residues 13–72 (YDKDSASQQEKITALQERLEVLETQNEEMRDKLLDTNAENNKYQQKLERLTHENKKLKQS) adopt a coiled-coil conformation. ATP-binding positions include 194–199 (GTGKTM) and His-333. Residues 404–406 (AFA) form a docks into pockets in the proteasome alpha-ring to cause gate opening region.

It belongs to the AAA ATPase family. In terms of assembly, homododecamer, in a proposed two stacked hexameric ring configuration, but may also form homohexamer. The hexameric complex has likely a two-ring architecture resembling a top hat that caps the 20S proteasome core at one or both ends. Upon ATP-binding, the C-terminus of PAN probably interacts with the alpha-rings of the proteasome core by binding to the intersubunit pockets. Interacts with SAMP1-MoaE conjugate in vitro, but does not bind to SAMP1 or MoaE alone. Interacts with NcsA.

The protein localises to the cytoplasm. With respect to regulation, ATPase activity is inhibited by EDTA in vitro. Functionally, ATPase which is responsible for recognizing, binding, unfolding and translocation of substrate proteins into the archaeal 20S proteasome core particle. Is essential for opening the gate of the 20S proteasome via an interaction with its C-terminus, thereby allowing substrate entry and access to the site of proteolysis. Thus, the C-terminus of the proteasomal ATPase functions like a 'key in a lock' to induce gate opening and therefore regulate proteolysis. Unfolding activity requires energy from ATP hydrolysis, whereas ATP binding alone promotes ATPase-20S proteasome association which triggers gate opening, and supports translocation of unfolded substrates. Is also able to cleave other nucleoside triphosphates including GTP and TTP, but the rate of hydrolysis is 4- to 5-fold slower than for ATP. This is Proteasome-activating nucleotidase 1 from Haloferax volcanii (strain ATCC 29605 / DSM 3757 / JCM 8879 / NBRC 14742 / NCIMB 2012 / VKM B-1768 / DS2) (Halobacterium volcanii).